The following is a 508-amino-acid chain: GATA zinc finger domain-containing protein 13 (508 aa).

Disordered regions lie at residues 20–51 (YSKN…INNN) and 203–296 (MSII…PEIE). Positions 23–51 (NNNNNNNNNNNNNINNNNNNNNNNNINNN) are enriched in low complexity. A compositionally biased stretch (polar residues) spans 203–224 (MSIIPSDNFPTPQLPLETNTDL). Residues 225–247 (NNTSDCSSTTFSSPPSSAFNSPN) are compositionally biased toward low complexity. Residues 248–266 (LQNDYTQPQNQKSQSSTIV) show a composition bias toward polar residues. Over residues 269–279 (NSSKSKSKNNK) the composition is skewed to basic residues. A GATA-type zinc finger spans residues 327-354 (CSICKIKCSIYWRRILINEVRTSVCNAC). Residues 356-433 (LRTMKKTKKE…NNNNNNNNNN (78 aa)) are a coiled coil. Low complexity predominate over residues 399–482 (TTTTTTTTTS…NNNNNDNYND (84 aa)). The disordered stretch occupies residues 399-484 (TTTTTTTTTS…NNNDNYNDSI (86 aa)).

The protein is GATA zinc finger domain-containing protein 13 (gtaM) of Dictyostelium discoideum (Social amoeba).